The primary structure comprises 257 residues: RLA class II histocompatibility antigen, DP beta chain (257 aa).

The first 29 residues, M1–T29, serve as a signal peptide directing secretion. The segment at P30–Q120 is beta-1. The Extracellular segment spans residues P30 to K224. Intrachain disulfides connect C45–C105 and C143–C199. N49 carries N-linked (GlcNAc...) asparagine glycosylation. The interval T121 to W214 is beta-2. The Ig-like C1-type domain occupies P123–T211. The connecting peptide stretch occupies residues K215–K224. A helical membrane pass occupies residues M225–M245. Over H246–R257 the chain is Cytoplasmic.

Belongs to the MHC class II family.

Its subcellular location is the membrane. The chain is RLA class II histocompatibility antigen, DP beta chain from Oryctolagus cuniculus (Rabbit).